A 137-amino-acid chain; its full sequence is Small ribosomal subunit protein uS11 (137 aa).

Disordered stretches follow at residues 1–32 and 118–137; these read MPPKSRASGPKKTQKSRRRDKKNVPHGNAHIK and ISDVTPQPHNGCRPPKRRRV. Residues 12 to 21 show a composition bias toward basic residues; that stretch reads KTQKSRRRDK.

Belongs to the universal ribosomal protein uS11 family. In terms of assembly, part of the 30S ribosomal subunit. Interacts with proteins S7 and S18. Binds to IF-3.

Functionally, located on the platform of the 30S subunit, it bridges several disparate RNA helices of the 16S rRNA. Forms part of the Shine-Dalgarno cleft in the 70S ribosome. The sequence is that of Small ribosomal subunit protein uS11 from Nocardia farcinica (strain IFM 10152).